The chain runs to 303 residues: GTPase Era (303 aa).

Residues 8–176 enclose the Era-type G domain; sequence YCGFIAIVGR…ASIVRKHMPE (169 aa). The G1 stretch occupies residues 16–23; the sequence is GRPNVGKS. 16-23 contributes to the GTP binding site; the sequence is GRPNVGKS. The G2 stretch occupies residues 42-46; it reads QTTRH. Residues 63 to 66 are G3; that stretch reads DTPG. GTP is bound by residues 63–67 and 125–128; these read DTPGL and NKVD. The segment at 125–128 is G4; it reads NKVD. Positions 155-157 are G5; the sequence is ISA. One can recognise a KH type-2 domain in the interval 207–284; the sequence is LGEELPYSVT…HLELWVKVKS (78 aa).

This sequence belongs to the TRAFAC class TrmE-Era-EngA-EngB-Septin-like GTPase superfamily. Era GTPase family. As to quaternary structure, monomer.

It localises to the cytoplasm. The protein localises to the cell inner membrane. In terms of biological role, an essential GTPase that binds both GDP and GTP, with rapid nucleotide exchange. Plays a role in 16S rRNA processing and 30S ribosomal subunit biogenesis and possibly also in cell cycle regulation and energy metabolism. This chain is GTPase Era, found in Yersinia pseudotuberculosis serotype O:1b (strain IP 31758).